The sequence spans 922 residues: Band 3 anion transport protein (922 aa).

2 disordered regions span residues 1 to 36 (MEGPGQDTEDALRRSLDPEGYEDTKGSRTSLGTMSN) and 355 to 389 (QHPDTVRSPGGPTAPKDTGDKGQAPQDDDPLLRTR). Over 1 to 416 (MEGPGQDTED…LSDIRDALNP (416 aa)) the chain is Cytoplasmic. A compositionally biased stretch (basic and acidic residues) spans 10-26 (DALRRSLDPEGYEDTKG). Positions 27 to 36 (SRTSLGTMSN) are enriched in polar residues. A helical membrane pass occupies residues 417 to 440 (QCLAAVIFIYFAALSPAITFGGLL). Over 441 to 448 (GEKTRGMM) the chain is Extracellular. The helical transmembrane segment at 449–469 (GVSELLLSTSVQCLLFSLLSA) threads the bilayer. The Cytoplasmic segment spans residues 470–472 (QPL). The discontinuously helical transmembrane segment at 473-489 (LVVGFSGPLLVFEEAFF) threads the bilayer. Topologically, residues 490–498 (RFCEDHGLE) are extracellular. A helical transmembrane segment spans residues 499 to 519 (YIVGRVWIGFWLILLVLLVVA). The Cytoplasmic portion of the chain corresponds to 520-531 (CEGTVLVRYLSR). The helical transmembrane segment at 532-554 (YTQEIFSFLISLIFIYETFAKLV) threads the bilayer. At 555-581 (TIFEAHPLQQSYDTDVSTEPSVPKPNT) the chain is on the extracellular side. Residues 582–602 (ALLSLVLMAGTFFLALFLRQF) form a helical membrane-spanning segment. Residues 603 to 613 (KNSVFLPGKVR) are Cytoplasmic-facing. The chain crosses the membrane as a helical span at residues 614 to 634 (RLIGDFGVPISIFVMALADFF). Topologically, residues 635 to 674 (IKDTYTQKLKVPRGLEVTNGTARGWFIHPMGSATPFPIWM) are extracellular. An N-linked (GlcNAc...) asparagine glycan is attached at N653. The chain crosses the membrane as a helical span at residues 675 to 695 (MFASPVPALLVFILIFLETQI). Residues 696–711 (TTLIVSKPERKLVKGS) are Cytoplasmic-facing. The chain crosses the membrane as a helical span at residues 712-730 (GFHLDLLLIVAMGGLAALF). Residues 731–748 (GMPWLSATTVRTITHANA) form a discontinuously helical membrane-spanning segment. The Cytoplasmic segment spans residues 749–771 (LTVVGKSAVPGERAHIVEVKEQR). 2 helical membrane-spanning segments follow: residues 772 to 792 (LSGLLVAVLIGVSILMEPILK) and 793 to 811 (YIPLAVLFGIFLYMGVTSL). At 812–849 (FGIQLFDRILLLLMPPKYHPKEPYVTRVKTWRITSSPL) the chain is on the cytoplasmic side. Residues 850 to 880 (TQILVVALLWGVKVSPASLRCPFVLVLTVPL) constitute an intramembrane region (discontinuously helical). Over 881–922 (RRLLLPRIFSEIELKCLDTDDAVVTFEEAEGQDVYNEVQMPS) the chain is Cytoplasmic.

This sequence belongs to the anion exchanger (TC 2.A.31) family. A dimer in solution, it spans the membrane asymmetrically and appears to be tetrameric. Erythrocytes.

The protein localises to the cell membrane. It localises to the basolateral cell membrane. The catalysed reaction is hydrogencarbonate(in) + chloride(out) = hydrogencarbonate(out) + chloride(in). In terms of biological role, functions both as a transporter that mediates electroneutral anion exchange across the cell membrane and as a structural protein. Major integral membrane glycoprotein of the erythrocyte membrane; required for normal flexibility and stability of the erythrocyte membrane and for normal erythrocyte shape via the interactions of its cytoplasmic domain with cytoskeletal proteins, glycolytic enzymes, and hemoglobin. Functions as a transporter that mediates the 1:1 exchange of inorganic anions across the erythrocyte membrane. Mediates chloride-bicarbonate exchange in the kidney, and is required for normal acidification of the urine. The polypeptide is Band 3 anion transport protein (SLC4A1) (Gallus gallus (Chicken)).